Here is a 461-residue protein sequence, read N- to C-terminus: Flavin-containing monooxygenase FMO GS-OX4 (461 aa).

Position 17-22 (17-22) interacts with FAD; that stretch reads GAGAAG. Residue 211 to 216 participates in NADP(+) binding; it reads GNFASG.

It belongs to the FMO family.

The enzyme catalyses a (Z)-omega-(methylsulfanyl)-N-sulfo-alkylhydroximate S-glucoside + NADPH + O2 + H(+) = a (Z)-omega-(methylsulfinyl)-alkyl-glucosinolate + NADP(+) + H2O. Functionally, catalyzes the conversion of methylthioalkyl glucosinolates of any chain length into methylsulfinylalkyl glucosinolates. In Arabidopsis thaliana (Mouse-ear cress), this protein is Flavin-containing monooxygenase FMO GS-OX4 (FMOGS-OX4).